A 279-amino-acid chain; its full sequence is HTH-type transcriptional regulator HdfR (279 aa).

The HTH lysR-type domain occupies 1–58 (MDTELLKTFLEVSRTRHFGRAAESLYLTQSAVSFRIRQLENQLGVNLFTRHRNNIRLT). The H-T-H motif DNA-binding region spans 18-37 (FGRAAESLYLTQSAVSFRIR).

Belongs to the LysR transcriptional regulatory family.

Negatively regulates the transcription of the flagellar master operon flhDC by binding to the upstream region of the operon. In Escherichia coli O6:K15:H31 (strain 536 / UPEC), this protein is HTH-type transcriptional regulator HdfR.